The following is a 263-amino-acid chain: Probable HTH-type transcriptional regulator ArcR (263 aa).

An HTH iclR-type domain is found at 14 to 74; the sequence is ITSVLNAVEI…DGDGTYQLGD (61 aa). Positions 35 to 54 form a DNA-binding region, H-T-H motif; sequence LQELTTELDLTKATIHTYMA. Residues 89-262 form the IclR-ED domain; sequence LYRLGREEID…ANIIEVRLET (174 aa).

Functionally, probably regulates transcription of the arcABC operon. The protein is Probable HTH-type transcriptional regulator ArcR (arcR) of Halobacterium salinarum (strain ATCC 29341 / DSM 671 / R1).